Here is a 117-residue protein sequence, read N- to C-terminus: uncharacterized protein (117 aa).

This is an uncharacterized protein from Methanocaldococcus jannaschii (strain ATCC 43067 / DSM 2661 / JAL-1 / JCM 10045 / NBRC 100440) (Methanococcus jannaschii).